Here is a 334-residue protein sequence, read N- to C-terminus: Flavonol synthase/flavanone 3-hydroxylase (334 aa).

Residues 196–295 enclose the Fe2OG dioxygenase domain; that stretch reads DLVYLMKINY…RMSWPVFLEP (100 aa). Residues His220, Asp222, and His276 each contribute to the Fe cation site.

This sequence belongs to the iron/ascorbate-dependent oxidoreductase family. Fe cation is required as a cofactor. It depends on L-ascorbate as a cofactor.

It is found in the cytoplasm. The enzyme catalyses a (2R,3R)-dihydroflavonol + 2-oxoglutarate + O2 = a flavonol + succinate + CO2 + H2O. It catalyses the reaction a (2S)-flavan-4-one + 2-oxoglutarate + O2 = a (2R,3R)-dihydroflavonol + succinate + CO2. Its pathway is secondary metabolite biosynthesis; flavonoid biosynthesis. Catalyzes the formation of flavonols from dihydroflavonols. It can act on dihydrokaempferol to produce kaempferol, on dihydroquercetin to produce quercitin and on dihydromyricetin to produce myricetin. The chain is Flavonol synthase/flavanone 3-hydroxylase (FLS) from Eustoma exaltatum subsp. russellianum (Bluebells).